The primary structure comprises 231 residues: mRNA-decapping enzyme subunit 1 (231 aa).

The tract at residues 92-120 (QNGSNNIQVNNGSDNSNRNSSGNGNSYKS) is disordered. Low complexity predominate over residues 101 to 120 (NNGSDNSNRNSSGNGNSYKS).

Belongs to the DCP1 family. As to quaternary structure, component of the decapping complex composed of DCP1 and DCP2. Interacts with mRNAs, DHH1, LSM1, LSM2, LSM3, LSM4, LSM5, LSM6, LSM7, and the cap-binding proteins PAB1 and TIF4632/eIF-4G. In terms of processing, phosphorylated.

The protein localises to the cytoplasm. Its subcellular location is the P-body. Functionally, component of the decapping complex necessary for the degradation of mRNAs, both in normal mRNA turnover and in nonsense-mediated mRNA decay. Removes the 7-methyl guanine cap structure from mRNA molecules, yielding a 5'-phosphorylated mRNA fragment and 7m-GDP. Decapping is the major pathway of mRNA degradation in yeast. It occurs through deadenylation, decapping and subsequent 5' to 3' exonucleolytic decay of the transcript body. DCP1 is activated by the DEAD-box helicase DHH1 and destabilizes the eIF-4F cap-binding complex from the mRNA. The chain is mRNA-decapping enzyme subunit 1 (DCP1) from Saccharomyces cerevisiae (strain ATCC 204508 / S288c) (Baker's yeast).